A 452-amino-acid polypeptide reads, in one-letter code: Bifunctional protein GlmU (452 aa).

The pyrophosphorylase stretch occupies residues 1–232 (MTSRTSLTIV…EDEVRGINTK (232 aa)). UDP-N-acetyl-alpha-D-glucosamine contacts are provided by residues 11–14 (LAAG), lysine 25, glutamine 78, and 83–84 (GT). Aspartate 108 is a binding site for Mg(2+). Residues glycine 144, glutamate 158, asparagine 173, and asparagine 230 each contribute to the UDP-N-acetyl-alpha-D-glucosamine site. Asparagine 230 is a binding site for Mg(2+). The linker stretch occupies residues 233–253 (AQLAEAEAVMQARLRQAALDA). The segment at 254 to 452 (GVTMIAPETV…KTRGKTRPAK (199 aa)) is N-acetyltransferase. UDP-N-acetyl-alpha-D-glucosamine-binding residues include arginine 319 and lysine 337. Histidine 349 acts as the Proton acceptor in catalysis. UDP-N-acetyl-alpha-D-glucosamine contacts are provided by tyrosine 352 and asparagine 363. Acetyl-CoA-binding positions include alanine 366, 372 to 373 (NY), serine 391, serine 409, and arginine 426.

This sequence in the N-terminal section; belongs to the N-acetylglucosamine-1-phosphate uridyltransferase family. It in the C-terminal section; belongs to the transferase hexapeptide repeat family. Homotrimer. It depends on Mg(2+) as a cofactor.

Its subcellular location is the cytoplasm. The catalysed reaction is alpha-D-glucosamine 1-phosphate + acetyl-CoA = N-acetyl-alpha-D-glucosamine 1-phosphate + CoA + H(+). The enzyme catalyses N-acetyl-alpha-D-glucosamine 1-phosphate + UTP + H(+) = UDP-N-acetyl-alpha-D-glucosamine + diphosphate. Its pathway is nucleotide-sugar biosynthesis; UDP-N-acetyl-alpha-D-glucosamine biosynthesis; N-acetyl-alpha-D-glucosamine 1-phosphate from alpha-D-glucosamine 6-phosphate (route II): step 2/2. It functions in the pathway nucleotide-sugar biosynthesis; UDP-N-acetyl-alpha-D-glucosamine biosynthesis; UDP-N-acetyl-alpha-D-glucosamine from N-acetyl-alpha-D-glucosamine 1-phosphate: step 1/1. The protein operates within bacterial outer membrane biogenesis; LPS lipid A biosynthesis. Catalyzes the last two sequential reactions in the de novo biosynthetic pathway for UDP-N-acetylglucosamine (UDP-GlcNAc). The C-terminal domain catalyzes the transfer of acetyl group from acetyl coenzyme A to glucosamine-1-phosphate (GlcN-1-P) to produce N-acetylglucosamine-1-phosphate (GlcNAc-1-P), which is converted into UDP-GlcNAc by the transfer of uridine 5-monophosphate (from uridine 5-triphosphate), a reaction catalyzed by the N-terminal domain. The chain is Bifunctional protein GlmU from Rhodopseudomonas palustris (strain BisA53).